A 541-amino-acid polypeptide reads, in one-letter code: Cytochrome P450 monooxygenase claW (541 aa).

Residues 12 to 32 (VINALVILFSFWAFLSLIRVI) form a helical membrane-spanning segment. Cys480 is a binding site for heme.

It belongs to the cytochrome P450 family. Heme is required as a cofactor.

Its subcellular location is the membrane. It participates in secondary metabolite biosynthesis; terpenoid biosynthesis. Its function is as follows. Cytochrome P450 monooxygenase; part of the gene cluster that mediates the biosynthesis of clavilactone A, a meroterpenoid that features a unique benzo-fused ten-membered carbocyclic ring unit with an alpha,beta-epoxy-gamma-lactone moiety, forming an intriguing 10/5/3 tricyclic nested skeleton. Cytochrome P450 monooxygenases claO, claP, claQ, claU, and claW are close orthologs, suggesting that a redundant function or pseudogenes are present in the cla cluster. These monoxygenases are not involved in clavilactone A biosynthesis nor its modification. ClaR, ClaS and ClaT are sufficient to produce clavilactone A. The biosynthesis begins with the prenyltransferase claS that transfers geranyl pyrophosphate (GPP) to hydroquinone to produces geranylhydroquinone. The cytochrome P450 monooxygenase claR then catalyzes the diradical coupling reaction between the intramolecular hydroquinone and allyl moieties to form the benzo-fused ten-membered carbocyclic ring unit of wigantol. Finally the cytochrome P450 monooxygenase claT exquisitely and stereoselectively assembles the alpha,beta-epoxy-gamma-lactone moiety, producing clavilactone A via arnebinol A. This chain is Cytochrome P450 monooxygenase claW, found in Ampulloclitocybe clavipes (Club foot).